A 1220-amino-acid chain; its full sequence is Formin-F (1220 aa).

Residues 1–10 (MNRIFGRKKK) show a composition bias toward basic residues. Residues 1-62 (MNRIFGRKKK…TNSKSADKFD (62 aa)) are disordered. Positions 6–373 (GRKKKDKDSD…QISVNKPMIG (368 aa)) constitute a GBD/FH3 domain. Positions 11–20 (DKDSDEKGST) are enriched in basic and acidic residues. The segment covering 41-56 (AYSSLQPDGNNSTNSK) has biased composition (polar residues). Positions 392-428 (VALQSEFQKNIEELAKVKDQLKKANFDLNIANQELSS) form a coiled coil. 3 disordered regions span residues 461–659 (IDSN…KFTV), 711–732 (SQKK…GTVS), and 1049–1192 (DEAK…KKDI). Low complexity-rich tracts occupy residues 501–518 (SKPP…SSSQ) and 525–554 (SNLS…PQQQ). One can recognise an FH1 domain in the interval 532 to 655 (SDSLSNDFKS…NSNKPPANAP (124 aa)). Positions 555–564 (NIESTLTPEP) are enriched in polar residues. The segment covering 575–638 (TTPPPAPPAP…GKGGPPPPPG (64 aa)) has biased composition (pro residues). Positions 656–1054 (KFTVSKPTTK…AIKRDEAKAK (399 aa)) constitute an FH2 domain. A compositionally biased stretch (basic and acidic residues) spans 711-722 (SQKKLEASDKKS). Residues 1032 to 1062 (YKDFQRDKEAAERAIKRDEAKAKKAQQLKRM) adopt a coiled-coil conformation. The span at 1066 to 1083 (IASSTNNKNPLASSSTSV) shows a compositional bias: polar residues. The DAD domain maps to 1083–1158 (VGDGGMVEDI…TPSKSGSRRE (76 aa)). Positions 1117-1142 (DSSSITTISEQSENSNTSSITITTPS) are enriched in low complexity. Basic and acidic residues predominate over residues 1161–1192 (TSKSSDKDKEKEKEKEKQCESTESEDINKKDI).

It belongs to the formin homology family. Diaphanous subfamily. In terms of assembly, interacts (via GBD/FH3 domain) with activated Rho-GTPases.

Functionally, formins play an important role in the nucleation of actin and the formation of linear actin filaments. This is Formin-F (forF) from Dictyostelium discoideum (Social amoeba).